The sequence spans 176 residues: Interleukin-1 receptor antagonist protein (176 aa).

The N-terminal stretch at 1–25 is a signal peptide; sequence METCRCPLSYLISFLLFLSHSETAC. A disulfide bridge connects residues C91 and C141. A glycan (N-linked (GlcNAc...) asparagine) is linked at N109.

This sequence belongs to the IL-1 family.

It localises to the secreted. Functionally, anti-inflammatory antagonist of interleukin-1 family of proinflammatory cytokines such as interleukin-1beta/IL1B and interleukin-1alpha/IL1A. Protects from immune dysregulation and uncontrolled systemic inflammation triggered by IL1 for a range of innate stimulatory agents such as pathogens. The chain is Interleukin-1 receptor antagonist protein (IL1RN) from Canis lupus familiaris (Dog).